Consider the following 786-residue polypeptide: Receptor-like protein 30 (786 aa).

A signal peptide spans 1–30 (MIPSQSNSFSGSVITLYFFLLGSLVLRTLA). Over 31 to 739 (SSRLHYCRHD…SEPEEQVINW (709 aa)) the chain is Extracellular. 4 N-linked (GlcNAc...) asparagine glycosylation sites follow: Asn-67, Asn-98, Asn-115, and Asn-133. LRR repeat units lie at residues 110 to 133 (LQQLQNLTLSDCHLYGEVTSSLGN), 134 to 158 (LSRLTHLDLSSNQLTGEVLASVSKL), 159 to 181 (NQLRDLLLSENSFSGNIPTSFTN), and 183 to 204 (TKLSSLDISSNQFTLENFSFIL). Asn-181, Asn-199, and Asn-206 each carry an N-linked (GlcNAc...) asparagine glycan. LRR repeat units follow at residues 207-231 (LTSLSSLNVASNHFKSTLPSDMSGL), 233-255 (NLKYFDVRENSFVGTFPTSLFTI), 257-279 (SLQIVYLEGNQFMGPIKFGNISS), 280-304 (SSRLWDLNLADNKFDGPIPEYISEI), 305-328 (HSLIVLDLSHNNLVGPIPTSISKL), 329-352 (VNLQHLSLSNNTLEGEVPGCLWGL), 354-375 (TVTLSHNSFNSFGKSSSGALDG), 376-399 (ESMQELDLGSNSLGGPFPHWICKQ), 400-423 (RFLKYLDLSNNLFNGSIPPCLKNS), 425-447 (YWLKGLVLRNNSFSGFLPDVFVN), 448-472 (ASMLLSLDVSYNRLEGKLPKSLINC), 474-496 (GMELLNVGSNIIKDTFPSWLVSL), 497-524 (PSLRVLILRSNAFYGSLYYDHISFGFQH), and 526-546 (RLIDISQNGFSGTLSPLYFSN). Asn-276 carries an N-linked (GlcNAc...) asparagine glycan. Asn-338 carries an N-linked (GlcNAc...) asparagine glycan. N-linked (GlcNAc...) asparagine glycans are attached at residues Asn-413, Asn-422, Asn-434, Asn-447, and Asn-471. Asn-558 carries an N-linked (GlcNAc...) asparagine glycan. LRR repeat units follow at residues 596–621 (IPYFFRAIDFSGNRFFGNIPESVGLL), 622–645 (KELRLLNLSGNSFTSNIPQSLANL), 646–669 (TNLETLDLSRNQLSGHIPRDLGSL), and 671–694 (FLSTMNFSHNLLEGPVPLGTQFQS). 2 N-linked (GlcNAc...) asparagine glycosylation sites follow: Asn-628 and Asn-644. Asn-676 carries an N-linked (GlcNAc...) asparagine glycan. A helical transmembrane segment spans residues 740-760 (IAAAIAYGPGVFCGLVIGHIF). Over 761-786 (FTAHKHEWFMEKFHRNKRRVVTTSAR) the chain is Cytoplasmic.

It belongs to the RLP family.

The protein localises to the cell membrane. Receptor for microbe-associated molecular patterns (MAMPs) that induces a BAK1-dependent basal immune response to necrotrophic fungi (e.g. S.sclerotiorum) in the presence of MAMPs (e.g. flg22 and SCLEROTINIA CULTURE FILTRATE ELICITOR1 (SCFE1) from the necrotrophic fungal pathogen S.sclerotiorum). Functionality seems to depend on the presence of the receptor kinase SOBIR1 as an adapter protein. Required for full non-host resistance to bacterial pathogens (e.g. P.syringae pv phaseolicola). The sequence is that of Receptor-like protein 30 from Arabidopsis thaliana (Mouse-ear cress).